The sequence spans 168 residues: 2-C-methyl-D-erythritol 2,4-cyclodiphosphate synthase (168 aa).

A divalent metal cation-binding residues include D11 and H13. Residues 11–13 and 41–42 contribute to the 4-CDP-2-C-methyl-D-erythritol 2-phosphate site; these read DVH and HS. H49 contacts a divalent metal cation. 4-CDP-2-C-methyl-D-erythritol 2-phosphate contacts are provided by residues 63–65, 68–72, 139–142, F146, and R149; these read DIG, FPDTD, and TTTE.

It belongs to the IspF family. In terms of assembly, homotrimer. A divalent metal cation serves as cofactor.

It catalyses the reaction 4-CDP-2-C-methyl-D-erythritol 2-phosphate = 2-C-methyl-D-erythritol 2,4-cyclic diphosphate + CMP. It participates in isoprenoid biosynthesis; isopentenyl diphosphate biosynthesis via DXP pathway; isopentenyl diphosphate from 1-deoxy-D-xylulose 5-phosphate: step 4/6. Its function is as follows. Involved in the biosynthesis of isopentenyl diphosphate (IPP) and dimethylallyl diphosphate (DMAPP), two major building blocks of isoprenoid compounds. Catalyzes the conversion of 4-diphosphocytidyl-2-C-methyl-D-erythritol 2-phosphate (CDP-ME2P) to 2-C-methyl-D-erythritol 2,4-cyclodiphosphate (ME-CPP) with a corresponding release of cytidine 5-monophosphate (CMP). The polypeptide is 2-C-methyl-D-erythritol 2,4-cyclodiphosphate synthase (Psychrobacter arcticus (strain DSM 17307 / VKM B-2377 / 273-4)).